The following is a 328-amino-acid chain: MNTRGNYSNGFTSKFFKPYLPSESGDDLVLPISFNSCLPKSLPKTVTVRSISGNIWKLGFKKCGGEVERFVMVSGWKKIVRDENLNGGDLLSFEFDGSHFFNFSIFDHETTCKRLKRSSEQSKDIIKVGSDCEEESQASDDVIVLNSDDSDDSDNDYSVEDDNVAEDDDGLEDEVDVEAEDGYDAKDSDGLEDEDDDEAEDGYDAKDDDGLEDEDDLEDEDDERRYLDDHENPYFTMTLNPKKKSQLHIPAHVIRDYDLTFPERITVVDEMGALEKAIKIQKNGCIFVKGFGSFIRRNKMKMTDKMICELKRTGGNLVHTIKVKIISG.

The segment at residues 13–109 (SKFFKPYLPS…FFNFSIFDHE (97 aa)) is a DNA-binding region (TF-B3). A disordered region spans residues 145 to 221 (LNSDDSDDSD…EDEDDLEDED (77 aa)). 2 stretches are compositionally biased toward acidic residues: residues 148–182 (DDSDDSDNDYSVEDDNVAEDDDGLEDEVDVEAEDG) and 190–221 (GLEDEDDDEAEDGYDAKDDDGLEDEDDLEDED).

It localises to the nucleus. The polypeptide is B3 domain-containing protein At5g60140 (Arabidopsis thaliana (Mouse-ear cress)).